We begin with the raw amino-acid sequence, 204 residues long: Prephenate decarboxylase (204 aa).

Belongs to the prephenate decarboxylase family.

It is found in the cytoplasm. The catalysed reaction is prephenate + H(+) = 3-[(4R)-4-hydroxycyclohexa-1,5-dien-1-yl]-2-oxopropanoate + CO2. It participates in antibiotic biosynthesis; bacilysin biosynthesis. Functionally, part of the bacABCDEF operon responsible for the biosynthesis of the nonribosomally synthesized dipeptide antibiotic bacilysin, composed of L-alanine and L-anticapsin. Bacilysin is an irreversible inactivator of the glutaminase domain of glucosamine synthetase. BacA is an unusual prephenate decarboxylase that avoids the typical aromatization of the cyclohexadienol ring of prephenate. BacA catalyzes the protonation of prephenate (1-carboxy-4-hydroxy-alpha-oxo-2,5-cyclohexadiene-1-propanoic acid) at C6 position, followed by a decarboxylation to produce the endocyclic-delta(4),delta(8)-7R-dihydro-hydroxyphenylpyruvate (en-H2HPP). En-H2HPP is able to undergo a slow nonenzymatic isomerization to produce the exocyclic-delta(3),delta(5)-dihydro-hydroxyphenylpyruvate (ex-H2HPP). BacA isomerizes only the pro-R double bond in prephenate. The protein is Prephenate decarboxylase of Bacillus subtilis (strain 168).